Reading from the N-terminus, the 89-residue chain is Small ribosomal subunit protein uS17 (89 aa).

The protein belongs to the universal ribosomal protein uS17 family. In terms of assembly, part of the 30S ribosomal subunit.

One of the primary rRNA binding proteins, it binds specifically to the 5'-end of 16S ribosomal RNA. The sequence is that of Small ribosomal subunit protein uS17 from Xylella fastidiosa (strain M12).